Consider the following 304-residue polypeptide: UDP-3-O-acyl-N-acetylglucosamine deacetylase (304 aa).

Zn(2+) contacts are provided by His78, His237, and Asp241. Residue His264 is the Proton donor of the active site.

The protein belongs to the LpxC family. The cofactor is Zn(2+).

It carries out the reaction a UDP-3-O-[(3R)-3-hydroxyacyl]-N-acetyl-alpha-D-glucosamine + H2O = a UDP-3-O-[(3R)-3-hydroxyacyl]-alpha-D-glucosamine + acetate. It participates in glycolipid biosynthesis; lipid IV(A) biosynthesis; lipid IV(A) from (3R)-3-hydroxytetradecanoyl-[acyl-carrier-protein] and UDP-N-acetyl-alpha-D-glucosamine: step 2/6. Its function is as follows. Catalyzes the hydrolysis of UDP-3-O-myristoyl-N-acetylglucosamine to form UDP-3-O-myristoylglucosamine and acetate, the committed step in lipid A biosynthesis. This is UDP-3-O-acyl-N-acetylglucosamine deacetylase from Polynucleobacter asymbioticus (strain DSM 18221 / CIP 109841 / QLW-P1DMWA-1) (Polynucleobacter necessarius subsp. asymbioticus).